Reading from the N-terminus, the 142-residue chain is Large ribosomal subunit protein uL11 (142 aa).

It belongs to the universal ribosomal protein uL11 family. As to quaternary structure, part of the ribosomal stalk of the 50S ribosomal subunit. Interacts with L10 and the large rRNA to form the base of the stalk. L10 forms an elongated spine to which L12 dimers bind in a sequential fashion forming a multimeric L10(L12)X complex. In terms of processing, one or more lysine residues are methylated.

Forms part of the ribosomal stalk which helps the ribosome interact with GTP-bound translation factors. The protein is Large ribosomal subunit protein uL11 of Shewanella baltica (strain OS223).